The chain runs to 39 residues: Photosystem II reaction center protein L (39 aa).

The chain crosses the membrane as a helical span at residues 18 to 38 (SLYLGLLLTFVMGILFSSYFF).

This sequence belongs to the PsbL family. In terms of assembly, PSII is composed of 1 copy each of membrane proteins PsbA, PsbB, PsbC, PsbD, PsbE, PsbF, PsbH, PsbI, PsbJ, PsbK, PsbL, PsbM, PsbT, PsbX, PsbY, Psb30/Ycf12, peripheral proteins PsbO, CyanoQ (PsbQ), PsbU, PsbV and a large number of cofactors. It forms dimeric complexes.

It localises to the cellular thylakoid membrane. Functionally, one of the components of the core complex of photosystem II (PSII). PSII is a light-driven water:plastoquinone oxidoreductase that uses light energy to abstract electrons from H(2)O, generating O(2) and a proton gradient subsequently used for ATP formation. It consists of a core antenna complex that captures photons, and an electron transfer chain that converts photonic excitation into a charge separation. This subunit is found at the monomer-monomer interface and is required for correct PSII assembly and/or dimerization. The sequence is that of Photosystem II reaction center protein L from Prochlorococcus marinus (strain MIT 9211).